The primary structure comprises 365 residues: DNA replication and repair protein RecF (365 aa).

30-37 (GQNGSGKT) contacts ATP.

The protein belongs to the RecF family.

It localises to the cytoplasm. The RecF protein is involved in DNA metabolism; it is required for DNA replication and normal SOS inducibility. RecF binds preferentially to single-stranded, linear DNA. It also seems to bind ATP. The protein is DNA replication and repair protein RecF of Shewanella halifaxensis (strain HAW-EB4).